The primary structure comprises 460 residues: Nucleosome assembly protein 1-like 2 (460 aa).

2 stretches are compositionally biased toward basic and acidic residues: residues 1 to 11 and 27 to 36; these read MAESENRKELS and LGEHLERGED. 2 disordered regions span residues 1-88 and 214-238; these read MAES…ADRP and EEEEEEEEDDIEATGEENKEEEDPK. The span at 214–236 shows a compositional bias: acidic residues; that stretch reads EEEEEEEEDDIEATGEENKEEED. The Nuclear localization signal signature appears at 346–352; it reads IKKKQKH.

It belongs to the nucleosome assembly protein (NAP) family.

The protein localises to the nucleus. Acidic protein which may be involved in interactions with other proteins or DNA. The polypeptide is Nucleosome assembly protein 1-like 2 (NAP1L2) (Homo sapiens (Human)).